A 265-amino-acid polypeptide reads, in one-letter code: Hydroxyethylthiazole kinase 2 (265 aa).

Residue methionine 39 coordinates substrate. The ATP site is built by lysine 115 and threonine 168. Glycine 195 is a substrate binding site.

It belongs to the Thz kinase family. Requires Mg(2+) as cofactor.

It catalyses the reaction 5-(2-hydroxyethyl)-4-methylthiazole + ATP = 4-methyl-5-(2-phosphooxyethyl)-thiazole + ADP + H(+). The protein operates within cofactor biosynthesis; thiamine diphosphate biosynthesis; 4-methyl-5-(2-phosphoethyl)-thiazole from 5-(2-hydroxyethyl)-4-methylthiazole: step 1/1. Its function is as follows. Catalyzes the phosphorylation of the hydroxyl group of 4-methyl-5-beta-hydroxyethylthiazole (THZ). This is Hydroxyethylthiazole kinase 2 from Clostridium botulinum (strain Langeland / NCTC 10281 / Type F).